The sequence spans 246 residues: UPF0736 protein GK0808 (246 aa).

The protein belongs to the UPF0736 family.

This chain is UPF0736 protein GK0808, found in Geobacillus kaustophilus (strain HTA426).